The chain runs to 420 residues: Probable secreted beta-glucosidase SUN4 (420 aa).

A signal peptide spans 1-24 (MKLSATTLTAASLIGYSTIVSALP). The interval 89 to 145 (TKSSSKVASSSESTEQIATTSSSAQTTLTSSETSTSESSVPISTSGSASTSSAASSA) is disordered. An N-linked (GlcNAc...) asparagine glycan is attached at Asn-395.

It belongs to the SUN family. Glycosylated.

The protein resides in the secreted. The protein localises to the cell wall. Its function is as follows. Involved in the remodeling of the cell wall during the various phases of yeast culture development and under various environmental conditions and plays a role in septation. The sequence is that of Probable secreted beta-glucosidase SUN4 (SUN4) from Saccharomyces cerevisiae (strain ATCC 204508 / S288c) (Baker's yeast).